Reading from the N-terminus, the 794-residue chain is Ribonucleoside-diphosphate reductase large subunit (794 aa).

An ATP-cone domain is found at 1-92; that stretch reads MHVIKRDGGQ…VSNLHKETKK (92 aa). Residues 5–6, 11–17, threonine 53, and aspartate 57 contribute to the ATP site; these read KR and EGVMFDK. GDP-binding residues include serine 202 and serine 217. The cysteines at positions 218 and 444 are disulfide-linked. Residues 226–228, lysine 243, arginine 256, and 263–264 contribute to the dTTP site; these read DSI and AG. Asparagine 427 serves as a coordination point for GDP. Asparagine 427 acts as the Proton acceptor in catalysis. The active-site Cysteine radical intermediate is cysteine 429. GDP is bound by residues glutamate 431 and 604–607; that span reads TAST. Glutamate 431 acts as the Proton acceptor in catalysis.

It belongs to the ribonucleoside diphosphate reductase large chain family. In terms of assembly, heterodimer of a large and a small subunit.

It localises to the cytoplasm. It carries out the reaction a 2'-deoxyribonucleoside 5'-diphosphate + [thioredoxin]-disulfide + H2O = a ribonucleoside 5'-diphosphate + [thioredoxin]-dithiol. Under complex allosteric control mediated by deoxynucleoside triphosphates and ATP binding to separate specificity and activation sites on the M1 subunit. The type of nucleotide bound at the specificity site determines substrate preference. It seems probable that ATP makes the enzyme reduce CDP and UDP, dGTP favors ADP reduction and dTTP favors GDP reduction. Stimulated by ATP and inhibited by dATP binding to the activity site. Functionally, provides the precursors necessary for DNA synthesis. Catalyzes the biosynthesis of deoxyribonucleotides from the corresponding ribonucleotides. This is Ribonucleoside-diphosphate reductase large subunit (rrm1) from Danio rerio (Zebrafish).